The sequence spans 970 residues: Cullin-4B (970 aa).

The span at 1 to 14 (MSRSTRSKERREND) shows a compositional bias: basic and acidic residues. 2 disordered regions span residues 1–157 (MSRS…SFCL) and 189–211 (AEES…QQQQ). A Phosphothreonine modification is found at Thr15. Ser17 carries the post-translational modification Phosphoserine. The segment covering 36–57 (PPRPPYPPLLPPVFPPPTPPPQ) has biased composition (pro residues). Residues 78–98 (SGFSSPNPSAASAAAQEVRSA) show a composition bias toward low complexity. Residues 99 to 109 (TDGNTSTTPPT) show a composition bias toward polar residues. Position 106 is a phosphothreonine (Thr106). Ser110 carries the phosphoserine modification. The Nuclear localization signal motif lies at 112–115 (KKRK). Low complexity predominate over residues 117 to 126 (NSSSSSSNSS). The span at 146–155 (DSASPSTSSF) shows a compositional bias: polar residues. Phosphoserine occurs at positions 154 and 200. Residues 192-211 (SSSSSSSSSPTAATSQQQQQ) show a composition bias toward low complexity. Thr202 is subject to Phosphothreonine. Residue Lys247 forms a Glycyl lysine isopeptide (Lys-Gly) (interchain with G-Cter in ubiquitin) linkage. Ser250 is modified (phosphoserine). The Cullin neddylation domain maps to 902–962 (DRQYQIDAAI…RDYMERDKEN (61 aa)). Residue Lys916 forms a Glycyl lysine isopeptide (Lys-Gly) (interchain with G-Cter in NEDD8) linkage.

The protein belongs to the cullin family. In terms of assembly, component of multiple DCX (DDB1-CUL4-X-box) E3 ubiquitin-protein ligase complexes that seem to be formed of DDB1, CUL4A or CUL4B, RBX1 and a variable substrate recognition component which seems to belong to a protein family described as DCAF (Ddb1- and Cul4-associated factor) or CDW (CUL4-DDB1-associated WD40-repeat) proteins. Component of the DCX(DTL) complex with the putative substrate recognition component DTL. Component of the DCX(DDB2) complex with the putative substrate recognition component DDB2. Component of DCX complexes part of the DesCEND (destruction via C-end degrons) pathway, which contain either TRPC4AP or DCAF12 as substrate-recognition component. Component of the DCX(AMBRA1) complex with the substrate recognition component AMBRA1. Part of a complex with RBX1 and TIP120A/CAND1. Component of the DCX(WDR77) complex, composed of Cul4b, Ddb1, Wdr77 and Rbx1. Interacts with RBX1, GRWD1, MLST8, SMU1, TLE2, TLE3, DCAF1, DDA1, DCAF6, DCAF17, DDB2, DCAF8, TIP120A/CAND1 and TMEM113. Interacts with cyclin E (CCNE1 or CCNE2) and with importins alpha-1 (KPNA2), alpha-3 (KPNA4), alpha-5 (KPNA1) and beta-1 (KPNB1). May interact with WDR26, WDR51B, SNRNP40, WDR61, WDR76 and WDR5. Interacts (unneddylated form) with DCUN1D1, DCUN1D2, DCUN1D3, DCUN1D4 and DCUN1D5; these interactions promote the cullin neddylation. Neddylated. Deneddylated via its interaction with the COP9 signalosome (CSN) complex. As to expression, expressed in oocytes (at protein level).

It localises to the cytoplasm. It is found in the nucleus. It functions in the pathway protein modification; protein ubiquitination. In terms of biological role, core component of multiple cullin-RING-based E3 ubiquitin-protein ligase complexes which mediate the ubiquitination and subsequent proteasomal degradation of target proteins. The functional specificity of the E3 ubiquitin-protein ligase complex depends on the variable substrate recognition subunit. CUL4B may act within the complex as a scaffold protein, contributing to catalysis through positioning of the substrate and the ubiquitin-conjugating enzyme. Plays a role as part of the E3 ubiquitin-protein ligase complex in polyubiquitination of CDT1, histone H2A, histone H3 and histone H4 in response to radiation-induced DNA damage. Targeted to UV damaged chromatin by DDB2 and may be important for DNA repair and DNA replication. A number of DCX complexes (containing either TRPC4AP or DCAF12 as substrate-recognition component) are part of the DesCEND (destruction via C-end degrons) pathway, which recognizes a C-degron located at the extreme C terminus of target proteins, leading to their ubiquitination and degradation. The DCX(AMBRA1) complex is a master regulator of the transition from G1 to S cell phase by mediating ubiquitination of phosphorylated cyclin-D (CCND1, CCND2 and CCND3). The DCX(AMBRA1) complex also acts as a regulator of Cul5-RING (CRL5) E3 ubiquitin-protein ligase complexes by mediating ubiquitination and degradation of Elongin-C (ELOC) component of CRL5 complexes. Required for ubiquitination of cyclin E (CCNE1 or CCNE2), and consequently, normal G1 cell cycle progression. Component of the DCX(WDR77) complex, which mediates ubiquitination and degradation of Irgm1 in intestinal cells. Regulates the mammalian target-of-rapamycin (mTOR) pathway involved in control of cell growth, size and metabolism. Specific CUL4B regulation of the mTORC1-mediated pathway is dependent upon 26S proteasome function and requires interaction between CUL4B and MLST8. With CUL4A, contributes to ribosome biogenesis. This chain is Cullin-4B, found in Mus musculus (Mouse).